A 377-amino-acid chain; its full sequence is Chaperone protein DnaJ 1 (377 aa).

The region spanning 4 to 68 (DYYQTLGVTR…EIRQRYDQFG (65 aa)) is the J domain. A CR-type zinc finger spans residues 136–218 (GGEKEIRIPH…CNGVGRKQET (83 aa)). 8 residues coordinate Zn(2+): C149, C152, C166, C169, C192, C195, C206, and C209. CXXCXGXG motif repeat units follow at residues 149–156 (CQVCEGTG), 166–173 (CGTCNGAG), 192–199 (CPTCNGSG), and 206–213 (CEACNGVG).

It belongs to the DnaJ family. In terms of assembly, homodimer. Zn(2+) serves as cofactor.

The protein resides in the cytoplasm. Its function is as follows. Participates actively in the response to hyperosmotic and heat shock by preventing the aggregation of stress-denatured proteins and by disaggregating proteins, also in an autonomous, DnaK-independent fashion. Unfolded proteins bind initially to DnaJ; upon interaction with the DnaJ-bound protein, DnaK hydrolyzes its bound ATP, resulting in the formation of a stable complex. GrpE releases ADP from DnaK; ATP binding to DnaK triggers the release of the substrate protein, thus completing the reaction cycle. Several rounds of ATP-dependent interactions between DnaJ, DnaK and GrpE are required for fully efficient folding. Also involved, together with DnaK and GrpE, in the DNA replication of plasmids through activation of initiation proteins. The protein is Chaperone protein DnaJ 1 of Synechocystis sp. (strain ATCC 27184 / PCC 6803 / Kazusa).